The primary structure comprises 975 residues: Translation initiation factor IF-2 (975 aa).

A compositionally biased stretch (basic and acidic residues) spans 48-63 (DHLRKSHGATDGDKRK). 2 disordered regions span residues 48-84 (DHLR…GKAR) and 98-388 (KRDD…QAPT). Residues 104–115 (ETGADQAQAQTD) are compositionally biased toward low complexity. Residues 120–177 (AELKRREEEARREAELLEKQAQELRERQERLEREEAERRAREEAAEAERRRAEEEAAA) show a composition bias toward basic and acidic residues. Low complexity predominate over residues 178-211 (KRAAAAQAEAAQQAAAAREQAQRAQSEPAEQSAQ). The span at 212–263 (DEARAAAERAAQREAAKKAEDAAREAADKARAEQEEIRKRREAAEAEARAIR) shows a compositional bias: basic and acidic residues. Low complexity predominate over residues 302–330 (KPAGEAAAARPAAKKPASGAPAPAAAPAG). Positions 359-372 (SSGGVDRGWRGGPK) are enriched in gly residues. In terms of domain architecture, tr-type G spans 475–644 (PRPPVVTVMG…LLQAEVLELK (170 aa)). Residues 484 to 491 (GHVDHGKT) are G1. Position 484 to 491 (484 to 491 (GHVDHGKT)) interacts with GTP. Residues 509 to 513 (GITQH) are G2. Positions 530-533 (DTPG) are G3. GTP contacts are provided by residues 530–534 (DTPGH) and 584–587 (NKID). A G4 region spans residues 584–587 (NKID). Residues 620–622 (SAK) form a G5 region.

The protein belongs to the TRAFAC class translation factor GTPase superfamily. Classic translation factor GTPase family. IF-2 subfamily.

Its subcellular location is the cytoplasm. Functionally, one of the essential components for the initiation of protein synthesis. Protects formylmethionyl-tRNA from spontaneous hydrolysis and promotes its binding to the 30S ribosomal subunits. Also involved in the hydrolysis of GTP during the formation of the 70S ribosomal complex. The protein is Translation initiation factor IF-2 of Burkholderia mallei (strain NCTC 10247).